We begin with the raw amino-acid sequence, 275 residues long: MQLFDDFCKSFNKELQRANFGFAYNRVHLFYRSQWQKDEINTIYLLYRWIWALFFLGVYIMCVIVQFCDGKFFIYMTNWGFGLCTITMLISAVQVTCWHFDVRSTRSLVQESGHKAETSRGLKIYWWLYNMTLSLALIISTVYWVFLHGKMNKPMRFPAISIITHGMNSVMMLIDFLVIAFPLRILHMVYGMSLAIFFFLFTLIYHLCGGTDEFGNHYVYPILDWNNPNRCMVTFVGIFLLIMCYWVLLFGLYKLKRMFNRAFSVVWSPHAVGLI.

The next 6 helical transmembrane spans lie at 45–65 (LLYR…CVIV), 72–92 (FFIY…LISA), 127–147 (WLYN…WVFL), 162–182 (IITH…IAFP), 185–205 (ILHM…TLIY), and 232–252 (MVTF…LFGL).

As to expression, expressed in cells of the somatic mesoderm, most notably the muscle founder cells, between embryonic stages 12 and 14, in growing muscle fibers in dorsal, lateral and ventral positions. At stage 16 strongest expression is in some ventral muscles and muscle 8. At stages 16/17 expression is restricted to some cells of the CNS, the brain and the gonads.

The protein resides in the membrane. May have a central role in the fusion process during myogenesis, within the somatic mesoderm. The chain is Protein rolling stone (rost) from Drosophila melanogaster (Fruit fly).